A 151-amino-acid chain; its full sequence is FAD synthase (151 aa).

ATP-binding positions include 9 to 10, 14 to 17, Asp96, and Tyr123; these read TF and HPGH.

Belongs to the archaeal FAD synthase family. Homodimer. It depends on a divalent metal cation as a cofactor.

The catalysed reaction is FMN + ATP + H(+) = FAD + diphosphate. It participates in cofactor biosynthesis; FAD biosynthesis; FAD from FMN: step 1/1. Functionally, catalyzes the transfer of the AMP portion of ATP to flavin mononucleotide (FMN) to produce flavin adenine dinucleotide (FAD) coenzyme. The chain is FAD synthase from Methanothermobacter thermautotrophicus (strain ATCC 29096 / DSM 1053 / JCM 10044 / NBRC 100330 / Delta H) (Methanobacterium thermoautotrophicum).